The primary structure comprises 643 residues: Transmembrane 9 superfamily member 4 (643 aa).

A signal peptide spans 1 to 23 (MAAAMIWWPRFLLLLCLTCKGST). The Extracellular portion of the chain corresponds to 24 to 282 (FYVPGVAPIN…TMSDVQIHWF (259 aa)). The helical transmembrane segment at 283–303 (SIINSVVVVFFLSGILSMIII) threads the bilayer. Residues 304 to 347 (RTLRKDIANYNKEDDIEDTMEESGWKLVHGDVFRPPQYPMILSS) lie on the Cytoplasmic side of the membrane. At Tyr313 the chain carries Phosphotyrosine. The helical transmembrane segment at 348–368 (LLGSGIQLFCMILIVIFVAML) threads the bilayer. The Extracellular segment spans residues 369-377 (GMLSPSSRG). Residues 378-398 (ALMTTACFLFMFMGVFGGFSA) form a helical membrane-spanning segment. The Cytoplasmic segment spans residues 399–417 (GRLYRTLKGHRWKKGAFCT). The chain crosses the membrane as a helical span at residues 418–438 (ATLYPGVVFGICFVLNCFIWG). Residues 439–450 (KHSSGAVPFPTM) lie on the Extracellular side of the membrane. The helical transmembrane segment at 451–471 (VALLCMWFGISLPLVYLGYYF) threads the bilayer. Over 472–502 (GFRKQPYDNPVRTNQIPRQIPEQRWYMNRFV) the chain is Cytoplasmic. The helical transmembrane segment at 503–523 (GILMAGILPFGAMFIELFFIF) threads the bilayer. Residues 524–536 (SAIWENQFYYLFG) are Extracellular-facing. The chain crosses the membrane as a helical span at residues 537-557 (FLFLVFIILVVSCSQISIVMV). Over 558–571 (YFQLCAEDYRWWWR) the chain is Cytoplasmic. A helical membrane pass occupies residues 572–592 (NFLVSGGSAFYVLVYAIFYFV). The Extracellular portion of the chain corresponds to 593–599 (NKLDIVE). Residues 600–620 (FIPSLLYFGYTTLMVLSFWLL) traverse the membrane as a helical segment. Over 621 to 643 (TGTIGFYAAYMFVRKIYAAVKID) the chain is Cytoplasmic.

The protein belongs to the nonaspanin (TM9SF) (TC 9.A.2) family.

The protein localises to the membrane. Its subcellular location is the golgi apparatus. The protein resides in the early endosome. Associates with proteins harboring glycine-rich transmembrane domains and ensures their efficient localization to the cell surface. This chain is Transmembrane 9 superfamily member 4 (Tm9sf4), found in Mus musculus (Mouse).